The chain runs to 656 residues: Vi polysaccharide export protein VexE (656 aa).

Functionally, may be involved in translocation of the Vi antigen. The sequence is that of Vi polysaccharide export protein VexE (vexE) from Salmonella typhi.